Consider the following 116-residue polypeptide: Insulin (116 aa).

An N-terminal signal peptide occupies residues 1–24 (MAALWLQSFSLLVLLVVSWPGSQA). 3 disulfide bridges follow: cysteine 32–cysteine 102, cysteine 44–cysteine 115, and cysteine 101–cysteine 106. Positions 56–93 (DVDQLLGFLPPKSGGAAAAGADNEVAEFAFKDQMEMMV) are cleaved as a propeptide — c peptide.

The protein belongs to the insulin family. Heterodimer of a B chain and an A chain linked by two disulfide bonds.

It is found in the secreted. Functionally, insulin decreases blood glucose concentration. It increases cell permeability to monosaccharides, amino acids and fatty acids. It accelerates glycolysis, the pentose phosphate cycle, and glycogen synthesis in liver. The sequence is that of Insulin (ins) from Lophius americanus (American angler).